A 285-amino-acid polypeptide reads, in one-letter code: Putative ABC transporter ATP-binding protein CPE0195 (285 aa).

The ABC transporter domain occupies Leu6–Arg242. Residue Gly39–Ser46 participates in ATP binding.

Belongs to the ABC transporter superfamily.

It is found in the cell membrane. Functionally, probably part of an ABC transporter complex. Responsible for energy coupling to the transport system. The chain is Putative ABC transporter ATP-binding protein CPE0195 from Clostridium perfringens (strain 13 / Type A).